A 151-amino-acid chain; its full sequence is HTH-type transcriptional regulator FL11 (151 aa).

The HTH asnC-type domain occupies 5-66 (LDEIDKKIIK…IIDPEALGYS (62 aa)). Residues 24–43 (LREISKITGLAESTIHERIR) constitute a DNA-binding region (H-T-H motif). 98–104 (ETTGDYD) contacts L-arginine. Residues N118, D122, and 133–135 (THT) contribute to the L-lysine site. L-arginine is bound by residues D122 and 133 to 135 (THT).

Homodimer. Binds DNA as a dimer and an octamer. The octamer formed with lysine is stable in solution, but the octamer formed with arginine is unstable without DNA. When crystallized in the absence of DNA, dimers are assembled into helical cylinders with six dimers per turn. In solution, predominantly behaves as a dimer.

Its activity is regulated as follows. In the famine mode, FL11 forms dimers and acts as a repressor, leading to growth arrest. In the feast mode, in the presence of high concentrations of lysine or arginine, four dimers assemble into an octamer and cover the fl11 and lysine biosynthesis promoters. This leads to the inhibition of fl11 expression and lysine biosynthesis, decrease of the FL11 concentration in the cell, derepression of the target genes and activation of the metabolism. In terms of biological role, DNA-binding protein involved in the repression of transcription of a large number of genes, thereby arresting growth, in response to environmental changes. Binding sites are identified in promoters of approximately 200 transcription units, including genes involved in ATP synthesis, transmembrane transport, translation and DNA synthesis. The polypeptide is HTH-type transcriptional regulator FL11 (Pyrococcus horikoshii (strain ATCC 700860 / DSM 12428 / JCM 9974 / NBRC 100139 / OT-3)).